Consider the following 297-residue polypeptide: Homoserine kinase (297 aa).

Proline 82 to serine 92 provides a ligand contact to ATP.

It belongs to the GHMP kinase family. Homoserine kinase subfamily.

It localises to the cytoplasm. The enzyme catalyses L-homoserine + ATP = O-phospho-L-homoserine + ADP + H(+). It participates in amino-acid biosynthesis; L-threonine biosynthesis; L-threonine from L-aspartate: step 4/5. Catalyzes the ATP-dependent phosphorylation of L-homoserine to L-homoserine phosphate. This Bacillus mycoides (strain KBAB4) (Bacillus weihenstephanensis) protein is Homoserine kinase.